A 527-amino-acid polypeptide reads, in one-letter code: Putative adhesin P1-like protein MPN_500 (527 aa).

Disordered stretches follow at residues 1–26 (MDDI…GSRS), 76–148 (GWRN…LTNY), 248–269 (ASGS…PEQS), and 468–527 (FGTD…VSGH). Positions 9-26 (TSAGSSSGTSTNTSGSRS) are enriched in low complexity. The span at 82–95 (TTSGSTGNANDTKF) shows a compositional bias: polar residues. Over residues 108-117 (SSGTNTSAGN) the composition is skewed to low complexity. The span at 128-148 (QNGQVKTSVQEATSGDNLTNY) shows a compositional bias: polar residues. A compositionally biased stretch (low complexity) spans 248–262 (ASGSGSNTTSSPGIG). Polar residues predominate over residues 468–495 (FGTDHSTQPQPQSLKTTTPVFGRSSGNL). Gly residues predominate over residues 500–513 (SGGGAGGGSSGSGQ).

Belongs to the adhesin P1 family.

The polypeptide is Putative adhesin P1-like protein MPN_500 (Mycoplasma pneumoniae (strain ATCC 29342 / M129 / Subtype 1) (Mycoplasmoides pneumoniae)).